We begin with the raw amino-acid sequence, 446 residues long: Exodeoxyribonuclease 7 large subunit (446 aa).

This sequence belongs to the XseA family. In terms of assembly, heterooligomer composed of large and small subunits.

It is found in the cytoplasm. The enzyme catalyses Exonucleolytic cleavage in either 5'- to 3'- or 3'- to 5'-direction to yield nucleoside 5'-phosphates.. In terms of biological role, bidirectionally degrades single-stranded DNA into large acid-insoluble oligonucleotides, which are then degraded further into small acid-soluble oligonucleotides. This is Exodeoxyribonuclease 7 large subunit from Streptococcus pneumoniae (strain Hungary19A-6).